Reading from the N-terminus, the 222-residue chain is uncharacterized protein (222 aa).

The protein belongs to the PhoU family.

The protein localises to the cytoplasm. In terms of biological role, not known; probably involved in phosphate transport and/or metabolism. This is an uncharacterized protein from Deinococcus radiodurans (strain ATCC 13939 / DSM 20539 / JCM 16871 / CCUG 27074 / LMG 4051 / NBRC 15346 / NCIMB 9279 / VKM B-1422 / R1).